Reading from the N-terminus, the 448-residue chain is Tryptophan dimethylallyltransferase 1 (448 aa).

L-tryptophan-binding positions include 80–81 and Glu89; that span reads IL. The substrate site is built by Arg100, Lys186, and Tyr188. L-tryptophan is bound by residues Tyr190 and Arg251. Arg264, Lys266, Tyr268, Gln350, Tyr352, Tyr416, and Tyr420 together coordinate substrate.

This sequence belongs to the tryptophan dimethylallyltransferase family. Homodimer.

It carries out the reaction L-tryptophan + dimethylallyl diphosphate = 4-(3-methylbut-2-enyl)-L-tryptophan + diphosphate. Its pathway is alkaloid biosynthesis; ergot alkaloid biosynthesis. Its function is as follows. Catalyzes the first step of ergot alkaloid biosynthesis. Ergot alkaloids, which are produced by endophyte fungi, can enhance plant host fitness, but also cause livestock toxicosis to host plants. This chain is Tryptophan dimethylallyltransferase 1 (dmaW1), found in Epichloe coenophiala (Tall fescue endophyte fungus).